We begin with the raw amino-acid sequence, 301 residues long: Ribonuclease Z (301 aa).

7 residues coordinate Zn(2+): H60, H62, D64, H65, H137, D207, and H265. The active-site Proton acceptor is D64.

Belongs to the RNase Z family. In terms of assembly, homodimer. It depends on Zn(2+) as a cofactor.

It catalyses the reaction Endonucleolytic cleavage of RNA, removing extra 3' nucleotides from tRNA precursor, generating 3' termini of tRNAs. A 3'-hydroxy group is left at the tRNA terminus and a 5'-phosphoryl group is left at the trailer molecule.. Zinc phosphodiesterase, which displays some tRNA 3'-processing endonuclease activity. Probably involved in tRNA maturation, by removing a 3'-trailer from precursor tRNA. In Exiguobacterium sibiricum (strain DSM 17290 / CCUG 55495 / CIP 109462 / JCM 13490 / 255-15), this protein is Ribonuclease Z.